Reading from the N-terminus, the 295-residue chain is uncharacterized protein (295 aa).

Positions 8-106 (QKTINWIESH…HMPPGAYRTF (99 aa)) constitute an HTH araC/xylS-type domain. The H-T-H motif DNA-binding region spans 25–46 (EDIVNVSSFSKFHFHRIFQKEV).

Functionally, probable transcriptional regulator. This is an uncharacterized protein from Bacillus subtilis (strain 168).